Reading from the N-terminus, the 178-residue chain is Endothelin-2 (178 aa).

The first 26 residues, 1–26 (MVAMPTAWCSIALALLLALHEGKGQV), serve as a signal peptide directing secretion. The propeptide occupies 27-46 (AAAPDQPAPSHRARASHLRP). 2 disulfide bridges follow: Cys49–Cys63 and Cys51–Cys59. A propeptide spanning residues 70–178 (VNTPGQTAPY…RPTHSRRWKR (109 aa)) is cleaved from the precursor. Residues 96 to 111 (CECSSGRDPACATFCH) are endothelin-like.

It belongs to the endothelin/sarafotoxin family.

It is found in the secreted. Endothelins are endothelium-derived vasoconstrictor peptides. The sequence is that of Endothelin-2 (EDN2) from Felis catus (Cat).